The primary structure comprises 455 residues: Maintenance of telomere capping protein 1 (455 aa).

Disordered stretches follow at residues 1–113 and 296–317; these read MAET…SATP and AKKMNKENKQENVGAGDDEDAS. Over residues 27-38 the composition is skewed to basic and acidic residues; it reads PTSKEFNNDDSK. Polar residues predominate over residues 80 to 113; sequence VAATSNERQQHDASNQPSQAAQTTINKNTESATP. The segment covering 296–305 has biased composition (basic and acidic residues); that stretch reads AKKMNKENKQ.

Belongs to the MTC1 family.

It is found in the cytoplasm. Involved in telomere capping. The sequence is that of Maintenance of telomere capping protein 1 from Schizosaccharomyces pombe (strain 972 / ATCC 24843) (Fission yeast).